A 557-amino-acid chain; its full sequence is Hydroxylamine reductase (557 aa).

[4Fe-4S] cluster-binding residues include C3, C6, C19, and C26. 8 residues coordinate hybrid [4Fe-2O-2S] cluster: H253, E277, C321, C408, C436, C461, E495, and K497. C408 is subject to Cysteine persulfide.

Belongs to the HCP family. Requires [4Fe-4S] cluster as cofactor. Hybrid [4Fe-2O-2S] cluster is required as a cofactor.

Its subcellular location is the cytoplasm. It catalyses the reaction A + NH4(+) + H2O = hydroxylamine + AH2 + H(+). Its function is as follows. Catalyzes the reduction of hydroxylamine to form NH(3) and H(2)O. This Acidiphilium cryptum (strain JF-5) protein is Hydroxylamine reductase.